Reading from the N-terminus, the 100-residue chain is Apolipoprotein C-II (100 aa).

The first 22 residues, 1–22 (MGSRFLLALFLVLLVLGCEVQA), serve as a signal peptide directing secretion. A lipid binding region spans residues 66–74 (SVDEKLRDM). Residues 78–100 (SSAAMTTYASIFTDQIFTLLKGE) are lipoprotein lipase cofactor.

It belongs to the apolipoprotein C2 family. Post-translationally, proapolipoprotein C-II is synthesized as a sialic acid containing glycoprotein which is subsequently desialylated prior to its proteolytic processing. Proapolipoprotein C-II, the major form found in plasma undergoes proteolytic cleavage of its N-terminal hexapeptide to generate the mature form apolipoprotein C-II, which occurs as the minor form in plasma.

Its subcellular location is the secreted. Its function is as follows. Component of chylomicrons, very low-density lipoproteins (VLDL), low-density lipoproteins (LDL), and high-density lipoproteins (HDL) in plasma. Plays an important role in lipoprotein metabolism as an activator of lipoprotein lipase. This Bramus lutescens (Transcaucasian mole vole) protein is Apolipoprotein C-II (APOC2).